Consider the following 370-residue polypeptide: Cobalt-precorrin-5B C(1)-methyltransferase (370 aa).

Belongs to the CbiD family.

It catalyses the reaction Co-precorrin-5B + S-adenosyl-L-methionine = Co-precorrin-6A + S-adenosyl-L-homocysteine. It participates in cofactor biosynthesis; adenosylcobalamin biosynthesis; cob(II)yrinate a,c-diamide from sirohydrochlorin (anaerobic route): step 6/10. Functionally, catalyzes the methylation of C-1 in cobalt-precorrin-5B to form cobalt-precorrin-6A. This chain is Cobalt-precorrin-5B C(1)-methyltransferase, found in Pseudomonas syringae pv. tomato (strain ATCC BAA-871 / DC3000).